We begin with the raw amino-acid sequence, 202 residues long: Coiled-coil domain-containing protein 69 (202 aa).

Positions 1 to 11 (MGCRQSRHSRG) are enriched in basic residues. 2 disordered regions span residues 1–20 (MGCRQSRHSRGKRAEKVEET) and 32–52 (GRILEGRHEEAGQVPQTSNAQ). Glycine 2 is lipidated: N-myristoyl glycine. Residues 32 to 42 (GRILEGRHEEA) are compositionally biased toward basic and acidic residues. Phosphoserine is present on serine 92. The stretch at 112 to 146 (WEQELESLHHVIEMKNERIHELEKQLFLLEMLKEK) forms a coiled coil.

Belongs to the CCDC69 family.

The protein localises to the cytoplasm. The protein resides in the cytoskeleton. It is found in the spindle. Its subcellular location is the midbody. In terms of biological role, may act as a scaffold to regulate the recruitment and assembly of spindle midzone components. Required for the localization of AURKB and PLK1 to the spindle midzone. This Mus musculus (Mouse) protein is Coiled-coil domain-containing protein 69 (Ccdc69).